The following is a 215-amino-acid chain: Urease accessory protein UreG (215 aa).

24 to 31 (GPVGSGKT) lines the GTP pocket.

The protein belongs to the SIMIBI class G3E GTPase family. UreG subfamily. In terms of assembly, homodimer. UreD, UreF and UreG form a complex that acts as a GTP-hydrolysis-dependent molecular chaperone, activating the urease apoprotein by helping to assemble the nickel containing metallocenter of UreC. The UreE protein probably delivers the nickel.

It localises to the cytoplasm. In terms of biological role, facilitates the functional incorporation of the urease nickel metallocenter. This process requires GTP hydrolysis, probably effectuated by UreG. The chain is Urease accessory protein UreG from Burkholderia ambifaria (strain ATCC BAA-244 / DSM 16087 / CCUG 44356 / LMG 19182 / AMMD) (Burkholderia cepacia (strain AMMD)).